We begin with the raw amino-acid sequence, 729 residues long: 1,4-alpha-glucan branching enzyme GlgB 2 (729 aa).

The active-site Nucleophile is the aspartate 408. Glutamate 461 functions as the Proton donor in the catalytic mechanism.

This sequence belongs to the glycosyl hydrolase 13 family. GlgB subfamily. Monomer.

The catalysed reaction is Transfers a segment of a (1-&gt;4)-alpha-D-glucan chain to a primary hydroxy group in a similar glucan chain.. It participates in glycan biosynthesis; glycogen biosynthesis. Its function is as follows. Catalyzes the formation of the alpha-1,6-glucosidic linkages in glycogen by scission of a 1,4-alpha-linked oligosaccharide from growing alpha-1,4-glucan chains and the subsequent attachment of the oligosaccharide to the alpha-1,6 position. This Xanthomonas campestris pv. campestris (strain 8004) protein is 1,4-alpha-glucan branching enzyme GlgB 2.